A 370-amino-acid chain; its full sequence is GTPase Obg (370 aa).

Positions 1–159 (MKFIDEARIE…RMLKLELKVL (159 aa)) constitute an Obg domain. The interval 128–147 (LHFKSSTNRAPRQKTDGKPG) is disordered. The OBG-type G domain occupies 160–334 (ADVGLLGMPN…LCYAIYDYLS (175 aa)). GTP is bound by residues 166–173 (GMPNAGKS), 191–195 (FTTLA), 213–216 (DIPG), 284–287 (NKLD), and 315–317 (SAL). Serine 173 and threonine 193 together coordinate Mg(2+).

It belongs to the TRAFAC class OBG-HflX-like GTPase superfamily. OBG GTPase family. Monomer. The cofactor is Mg(2+).

The protein resides in the cytoplasm. Its function is as follows. An essential GTPase which binds GTP, GDP and possibly (p)ppGpp with moderate affinity, with high nucleotide exchange rates and a fairly low GTP hydrolysis rate. Plays a role in control of the cell cycle, stress response, ribosome biogenesis and in those bacteria that undergo differentiation, in morphogenesis control. The polypeptide is GTPase Obg (Burkholderia orbicola (strain MC0-3)).